We begin with the raw amino-acid sequence, 541 residues long: Chaperonin GroEL (541 aa).

ATP-binding positions include 29–32, 86–90, glycine 413, 480–482, and aspartate 496; these read TLGP, DGTTT, and NAA.

It belongs to the chaperonin (HSP60) family. Forms a cylinder of 14 subunits composed of two heptameric rings stacked back-to-back. Interacts with the co-chaperonin GroES.

The protein localises to the cytoplasm. It carries out the reaction ATP + H2O + a folded polypeptide = ADP + phosphate + an unfolded polypeptide.. Its function is as follows. Together with its co-chaperonin GroES, plays an essential role in assisting protein folding. The GroEL-GroES system forms a nano-cage that allows encapsulation of the non-native substrate proteins and provides a physical environment optimized to promote and accelerate protein folding. This chain is Chaperonin GroEL, found in Gardnerella vaginalis.